Here is a 353-residue protein sequence, read N- to C-terminus: MTAIRPGSVTFENVTKKFGNFTALPNLSLTVEPGTLVTLLGPSGCGKTTTLRLLAGLEHPTSGRILIGGKDVTNLPANERDVSMVFQSYALFPHMTSLENVAYGLESSGFKKNEARERAEEGLKLVGLGGMGHRLPAELSGGQQQRVAVARALVLEPQVLLLDEPLSTLDARLRRRVRTEIRELQQRLGFTAVYVTHDQDEALAVSDTIIVMKEGGIAQKGSPRDLYEAPASAFIADFMGEANVVPCEVISAENGEAVIRVAGLTHRVPARNAQPGPAQLAIRPNAVTLQPQAGGGFSGTVAHSAYLGDHIEYEIETEHGKLFIVDPAVEQSLPLQTDVSIQFKTRGLAIINQ.

The region spanning Val9–Met239 is the ABC transporter domain. Gly41–Thr48 is a binding site for ATP.

Belongs to the ABC transporter superfamily. Fe(3+) ion importer (TC 3.A.1.10) family. The complex is composed of two ATP-binding proteins (FbpC), two transmembrane proteins (FbpB) and a solute-binding protein (FbpA).

The protein resides in the cell inner membrane. It carries out the reaction Fe(3+)(out) + ATP + H2O = Fe(3+)(in) + ADP + phosphate + H(+). Its function is as follows. Part of the ABC transporter complex FbpABC involved in Fe(3+) ions import. Responsible for energy coupling to the transport system. The protein is Fe(3+) ions import ATP-binding protein FbpC of Brucella abortus (strain 2308).